Here is a 109-residue protein sequence, read N- to C-terminus: Flagellar hook-basal body complex protein FliE (109 aa).

Belongs to the FliE family.

It is found in the bacterial flagellum basal body. The sequence is that of Flagellar hook-basal body complex protein FliE from Pseudomonas paraeruginosa (strain DSM 24068 / PA7) (Pseudomonas aeruginosa (strain PA7)).